A 71-amino-acid chain; its full sequence is Small ribosomal subunit protein bS21 (71 aa).

Belongs to the bacterial ribosomal protein bS21 family.

The chain is Small ribosomal subunit protein bS21 from Photobacterium profundum (strain SS9).